Consider the following 373-residue polypeptide: Dual-specificity RNA methyltransferase RlmN (373 aa).

Glutamate 94 acts as the Proton acceptor in catalysis. The region spanning 100–339 (EDDRATLCVS…VIVRKTRGDD (240 aa)) is the Radical SAM core domain. Cysteine 107 and cysteine 344 form a disulfide bridge. The [4Fe-4S] cluster site is built by cysteine 114, cysteine 118, and cysteine 121. Residues 168 to 169 (GE), serine 200, 222 to 224 (SIH), and asparagine 301 contribute to the S-adenosyl-L-methionine site. The S-methylcysteine intermediate role is filled by cysteine 344.

The protein belongs to the radical SAM superfamily. RlmN family. The cofactor is [4Fe-4S] cluster.

It is found in the cytoplasm. It catalyses the reaction adenosine(2503) in 23S rRNA + 2 reduced [2Fe-2S]-[ferredoxin] + 2 S-adenosyl-L-methionine = 2-methyladenosine(2503) in 23S rRNA + 5'-deoxyadenosine + L-methionine + 2 oxidized [2Fe-2S]-[ferredoxin] + S-adenosyl-L-homocysteine. The enzyme catalyses adenosine(37) in tRNA + 2 reduced [2Fe-2S]-[ferredoxin] + 2 S-adenosyl-L-methionine = 2-methyladenosine(37) in tRNA + 5'-deoxyadenosine + L-methionine + 2 oxidized [2Fe-2S]-[ferredoxin] + S-adenosyl-L-homocysteine. In terms of biological role, specifically methylates position 2 of adenine 2503 in 23S rRNA and position 2 of adenine 37 in tRNAs. m2A2503 modification seems to play a crucial role in the proofreading step occurring at the peptidyl transferase center and thus would serve to optimize ribosomal fidelity. In Shewanella sp. (strain ANA-3), this protein is Dual-specificity RNA methyltransferase RlmN.